Consider the following 314-residue polypeptide: Nodulation protein D 1 (314 aa).

The region spanning 6–63 is the HTH lysR-type domain; the sequence is LDLNLLVALDALMTERNLTAAARQINLSQPAMSAAIARLRSYFRDELFTMRGRELVPT. Positions 23–42 form a DNA-binding region, H-T-H motif; the sequence is LTAAARQINLSQPAMSAAIA.

It belongs to the LysR transcriptional regulatory family.

In terms of biological role, nodD regulates the expression of the nodABCFE genes which encode other nodulation proteins. NodD is also a negative regulator of its own expression. Binds flavonoids as inducers. In Bradyrhizobium elkanii, this protein is Nodulation protein D 1 (nodD1).